Reading from the N-terminus, the 1099-residue chain is SLIT-ROBO Rho GTPase-activating protein 3 (1099 aa).

Residues Ala19–Asp314 form the F-BAR domain. Residues His205–Arg225 form a disordered region. Residues Gln352–Thr392 adopt a coiled-coil conformation. The disordered stretch occupies residues Glu471 to Pro493. The Rho-GAP domain maps to Gly506–Phe694. Positions Val744–Met803 constitute an SH3 domain. Over residues Asp809 to Ser820 the composition is skewed to polar residues. The tract at residues Asp809–Phe847 is disordered. 5 positions are modified to phosphoserine: Ser817, Ser820, Ser821, Ser837, and Ser858. Disordered stretches follow at residues Ala861 to Lys911 and Pro926 to Gly950. Basic and acidic residues predominate over residues Pro926–Ser936. Polar residues predominate over residues Met937–Ser947. Residues His952–Ala987 are a coiled coil. Ser954 is subject to Phosphoserine. Residues Leu995–Met1099 are disordered. Low complexity-rich tracts occupy residues Arg1026 to Thr1038 and Val1060 to Ser1074. Polar residues predominate over residues Pro1089–Met1099.

Homodimer. Forms a heterooligomer with SRGAP1 and SRGAP2 through its F-BAR domain. Interacts with WASF1. Probably interacts with ROBO1. Interacts with FASLG. In terms of tissue distribution, highly expressed in adult and fetal brain. Expressed at low levels in kidney. Isoform 3 is expressed in the kidney but is absent in the brain.

In terms of biological role, GTPase-activating protein for RAC1 and perhaps Cdc42, but not for RhoA small GTPase. May attenuate RAC1 signaling in neurons. The polypeptide is SLIT-ROBO Rho GTPase-activating protein 3 (SRGAP3) (Homo sapiens (Human)).